Reading from the N-terminus, the 104-residue chain is Large ribosomal subunit protein bL21 (104 aa).

Belongs to the bacterial ribosomal protein bL21 family. Part of the 50S ribosomal subunit. Contacts protein L20.

Its function is as follows. This protein binds to 23S rRNA in the presence of protein L20. This chain is Large ribosomal subunit protein bL21, found in Helicobacter hepaticus (strain ATCC 51449 / 3B1).